A 353-amino-acid polypeptide reads, in one-letter code: MLYQILLRLFFLVSPERVHTLVFAALRAIAAFTPTRWLLNRLCAPTDPILGTEVFGVHFPAPLGLAAGFDKDGEGLKVWGPLGFGYAEVGTVTAIAQPGNPKPRLFRLPADRGLLNRMGFNNHGAAALAPRLATRTSTVPIGANIGKSKIVEPAFASSDYRVSARQVGPAADFLVVNVSSPNTPGLRDLQAIGELRKILSAVLEETTAPVLVKIAPDLSDADIDEIADLAVELGLAGIVATNTTISRAALKTTGVEDLGAGGVSGPPVAARSLEVLRRLYRRVGDRLVLISVGGIEDADDAWARIIAGASLLQGYTGFIYRGGFYAKRIHDGIAQRLRAGGFASLQDAVGSAT.

FMN contacts are provided by residues 67 to 71 (AGFDK) and threonine 91. Lysine 71 provides a ligand contact to substrate. Position 116–120 (116–120 (NRMGF)) interacts with substrate. FMN contacts are provided by asparagine 144 and asparagine 177. Asparagine 177 serves as a coordination point for substrate. Catalysis depends on serine 180, which acts as the Nucleophile. Residue asparagine 182 coordinates substrate. 2 residues coordinate FMN: lysine 213 and threonine 241. 242 to 243 (NT) contributes to the substrate binding site. FMN contacts are provided by residues glycine 265, glycine 294, and 315–316 (YT).

This sequence belongs to the dihydroorotate dehydrogenase family. Type 2 subfamily. As to quaternary structure, monomer. It depends on FMN as a cofactor.

The protein resides in the cell membrane. It carries out the reaction (S)-dihydroorotate + a quinone = orotate + a quinol. Its pathway is pyrimidine metabolism; UMP biosynthesis via de novo pathway; orotate from (S)-dihydroorotate (quinone route): step 1/1. Functionally, catalyzes the conversion of dihydroorotate to orotate with quinone as electron acceptor. This is Dihydroorotate dehydrogenase (quinone) from Mycobacteroides abscessus (strain ATCC 19977 / DSM 44196 / CCUG 20993 / CIP 104536 / JCM 13569 / NCTC 13031 / TMC 1543 / L948) (Mycobacterium abscessus).